The chain runs to 434 residues: Serine hydroxymethyltransferase 1 (434 aa).

(6S)-5,6,7,8-tetrahydrofolate is bound by residues L136 and 140 to 142 (GHL). K245 is modified (N6-(pyridoxal phosphate)lysine).

The protein belongs to the SHMT family. In terms of assembly, homodimer. It depends on pyridoxal 5'-phosphate as a cofactor.

The protein resides in the cytoplasm. It carries out the reaction (6R)-5,10-methylene-5,6,7,8-tetrahydrofolate + glycine + H2O = (6S)-5,6,7,8-tetrahydrofolate + L-serine. It participates in one-carbon metabolism; tetrahydrofolate interconversion. Its pathway is amino-acid biosynthesis; glycine biosynthesis; glycine from L-serine: step 1/1. Catalyzes the reversible interconversion of serine and glycine with tetrahydrofolate (THF) serving as the one-carbon carrier. This reaction serves as the major source of one-carbon groups required for the biosynthesis of purines, thymidylate, methionine, and other important biomolecules. Also exhibits THF-independent aldolase activity toward beta-hydroxyamino acids, producing glycine and aldehydes, via a retro-aldol mechanism. The protein is Serine hydroxymethyltransferase 1 of Rhodospirillum rubrum (strain ATCC 11170 / ATH 1.1.1 / DSM 467 / LMG 4362 / NCIMB 8255 / S1).